The sequence spans 650 residues: Cytosolic Fe-S cluster assembly factor NAR1 (650 aa).

Positions 22, 81, 84, 87, 215, 270, 480, and 484 each coordinate [4Fe-4S] cluster.

Belongs to the NARF family.

Its function is as follows. Component of the cytosolic Fe/S protein assembly machinery. Required for maturation of extramitochondrial Fe/S proteins. May play a role in the transfer of pre-assembled Fe/S clusters to target apoproteins. This is Cytosolic Fe-S cluster assembly factor NAR1 (NAR1) from Cryptococcus neoformans var. neoformans serotype D (strain JEC21 / ATCC MYA-565) (Filobasidiella neoformans).